Reading from the N-terminus, the 128-residue chain is UPF0325 protein KPN78578_01770 (128 aa).

The protein belongs to the UPF0325 family.

The polypeptide is UPF0325 protein KPN78578_01770 (Klebsiella pneumoniae subsp. pneumoniae (strain ATCC 700721 / MGH 78578)).